We begin with the raw amino-acid sequence, 161 residues long: Cyclic pyranopterin monophosphate synthase (161 aa).

Substrate-binding positions include 75 to 77 (LCH) and 113 to 114 (ME). Residue aspartate 128 is part of the active site.

The protein belongs to the MoaC family. Homohexamer; trimer of dimers.

It catalyses the reaction (8S)-3',8-cyclo-7,8-dihydroguanosine 5'-triphosphate = cyclic pyranopterin phosphate + diphosphate. The protein operates within cofactor biosynthesis; molybdopterin biosynthesis. In terms of biological role, catalyzes the conversion of (8S)-3',8-cyclo-7,8-dihydroguanosine 5'-triphosphate to cyclic pyranopterin monophosphate (cPMP). The protein is Cyclic pyranopterin monophosphate synthase of Escherichia coli O9:H4 (strain HS).